The following is a 467-amino-acid chain: Xanthan biosynthesis protein XanB (467 aa).

Belongs to the mannose-6-phosphate isomerase type 2 family.

The enzyme catalyses D-mannose 6-phosphate = D-fructose 6-phosphate. It catalyses the reaction alpha-D-mannose 1-phosphate + GTP + H(+) = GDP-alpha-D-mannose + diphosphate. It participates in nucleotide-sugar biosynthesis; GDP-alpha-D-mannose biosynthesis; GDP-alpha-D-mannose from alpha-D-mannose 1-phosphate (GTP route): step 1/1. The protein operates within nucleotide-sugar biosynthesis; GDP-alpha-D-mannose biosynthesis; alpha-D-mannose 1-phosphate from D-fructose 6-phosphate: step 1/2. Functionally, involved in xanthan production. The protein is Xanthan biosynthesis protein XanB (xanB) of Xanthomonas campestris pv. campestris (strain B100).